We begin with the raw amino-acid sequence, 297 residues long: NAC domain-containing protein 72 (297 aa).

Positions 14–162 constitute an NAC domain; the sequence is LPPGFRFYPT…DWVLCRIYKK (149 aa). A DNA-binding region spans residues 111 to 168; the sequence is VGIKKALVFYAGKAPKGTKTNWIMHEYRLIEHSRSHGSSKLDDWVLCRIYKKTSGSQR. Disordered regions lie at residues 168–195 and 259–278; these read RQAV…SQLD and GEAE…LTQS. Residues 266-277 are compositionally biased toward polar residues; it reads VNRQQNSSGLTQ.

In terms of tissue distribution, expressed in leaves and in root pericycle and epidermis.

The protein localises to the nucleus. Transcription factors that bind specifically to the 5'-CATGTG-3' motif and with bipartite regions with 5'-CGTr-3' and 5'-YACG-3' as cores. Involved in the regulation of metabolic reprogramming during senescence by promoting the chloroplast protein degradation and the catabolism of lysine, phytol and free fatty acids via the induction of CV, LKR/SDH and PES1 expression. Also triggers the degradation of starch and the accumulation of mono- and disaccharides during senescence by enhancing the expression of AMY1, SFP1 and SWEET15. The chain is NAC domain-containing protein 72 from Arabidopsis thaliana (Mouse-ear cress).